The following is a 197-amino-acid chain: Chaperone protein dnaJ 20, chloroplastic (197 aa).

A chloroplast-targeting transit peptide spans 1–60 (MKCYKSSSILSTNHHPFFYKQQPISSLQPTSIPTTISYPTRTRFSSTRIQSRLTHDDPVK). Positions 66–133 (SFYDLLGVTE…RRRVLYDRDL (68 aa)) constitute a J domain. Residues 169 to 197 (SGLRRRSNQKDNNTMSWAARMRRQQQESS) are disordered.

This sequence belongs to the DnaJ family. C/III subfamily. As to expression, light-grown seedlings.

Its subcellular location is the plastid. It localises to the chloroplast. In terms of biological role, plays a continuous role in plant development probably in the structural organization of compartments. The sequence is that of Chaperone protein dnaJ 20, chloroplastic (ATJ20) from Arabidopsis thaliana (Mouse-ear cress).